The following is a 144-amino-acid chain: Transcription antitermination protein NusB (144 aa).

The protein belongs to the NusB family.

In terms of biological role, involved in transcription antitermination. Required for transcription of ribosomal RNA (rRNA) genes. Binds specifically to the boxA antiterminator sequence of the ribosomal RNA (rrn) operons. The protein is Transcription antitermination protein NusB of Paraburkholderia phytofirmans (strain DSM 17436 / LMG 22146 / PsJN) (Burkholderia phytofirmans).